The primary structure comprises 671 residues: DNA ligase (671 aa).

NAD(+) is bound by residues 32 to 36 (DVEYD), 81 to 82 (SL), and Glu113. The active-site N6-AMP-lysine intermediate is the Lys115. Residues Arg136, Glu173, Lys290, and Lys314 each contribute to the NAD(+) site. 4 residues coordinate Zn(2+): Cys408, Cys411, Cys426, and Cys432. The BRCT domain occupies 593–671 (EIDSPFAGKT…EAEMLRLLGS (79 aa)).

This sequence belongs to the NAD-dependent DNA ligase family. LigA subfamily. Mg(2+) is required as a cofactor. Requires Mn(2+) as cofactor.

The catalysed reaction is NAD(+) + (deoxyribonucleotide)n-3'-hydroxyl + 5'-phospho-(deoxyribonucleotide)m = (deoxyribonucleotide)n+m + AMP + beta-nicotinamide D-nucleotide.. Its function is as follows. DNA ligase that catalyzes the formation of phosphodiester linkages between 5'-phosphoryl and 3'-hydroxyl groups in double-stranded DNA using NAD as a coenzyme and as the energy source for the reaction. It is essential for DNA replication and repair of damaged DNA. The chain is DNA ligase from Escherichia coli O17:K52:H18 (strain UMN026 / ExPEC).